Reading from the N-terminus, the 159-residue chain is Ribosomal RNA large subunit methyltransferase H (159 aa).

S-adenosyl-L-methionine is bound by residues leucine 76, glycine 108, and 127 to 132 (FGRMTL).

It belongs to the RNA methyltransferase RlmH family. Homodimer.

Its subcellular location is the cytoplasm. The enzyme catalyses pseudouridine(1915) in 23S rRNA + S-adenosyl-L-methionine = N(3)-methylpseudouridine(1915) in 23S rRNA + S-adenosyl-L-homocysteine + H(+). In terms of biological role, specifically methylates the pseudouridine at position 1915 (m3Psi1915) in 23S rRNA. The sequence is that of Ribosomal RNA large subunit methyltransferase H from Lactococcus lactis subsp. cremoris (strain SK11).